Consider the following 528-residue polypeptide: Protein BFR2 (528 aa).

Disordered stretches follow at residues 14–158 (NKSK…ADAK) and 372–401 (DSNS…NNAI). A compositionally biased stretch (acidic residues) spans 132–146 (DSGDSDSDSGSDAGE).

The protein belongs to the AATF family.

Its subcellular location is the nucleus. The protein resides in the nucleolus. This chain is Protein BFR2 (BFR2), found in Eremothecium gossypii (strain ATCC 10895 / CBS 109.51 / FGSC 9923 / NRRL Y-1056) (Yeast).